The sequence spans 194 residues: Factor in the germline alpha (194 aa).

Positions 59 to 111 (ERRRVANAKERERIKNLNRGFAKLKALVPFLPQSRKPSKVDILKGATEYIQIL) constitute a bHLH domain. The segment covering 121–137 (SEKQSPEEQTHSGRPSD) has biased composition (basic and acidic residues). Residues 121–163 (SEKQSPEEQTHSGRPSDPHVSSTRELLGNATQPTSCASGLKKE) are disordered. Over residues 139 to 157 (HVSSTRELLGNATQPTSCA) the composition is skewed to polar residues.

As to quaternary structure, heterodimer with TCF3/isoform E12. As to expression, expressed only in the oocytes within the ovary and at lower level in the testis. Found in the resting oocytes of the primordial follicle cells, at the periphery of the ovary and in the hilar region. Also detected in growing oocytes, but at lower levels.

It localises to the nucleus. Functionally, germ-line specific transcription factor implicated in postnatal oocyte-specific gene expression. Plays a key regulatory role in the expression of multiple oocyte-specific genes, including those that initiate folliculogenesis and those that encode the zona pellucida (ZP1, ZP2 and ZP3) required for fertilization and early embryonic survival. Essential for oocytes to survive and form primordial follicles. The persistence of FIGLA in adult females suggests that it may regulate additional pathways that are essential for normal ovarian development. Binds to the E-box (5'-CANNTG-3') of the ZPs (ZP1, ZP2, ZP3) promoters. The protein is Factor in the germline alpha (Figla) of Mus musculus (Mouse).